A 92-amino-acid polypeptide reads, in one-letter code: Small ribosomal subunit protein uS19 (92 aa).

Belongs to the universal ribosomal protein uS19 family.

Functionally, protein S19 forms a complex with S13 that binds strongly to the 16S ribosomal RNA. The chain is Small ribosomal subunit protein uS19 from Streptococcus pyogenes serotype M49 (strain NZ131).